The sequence spans 257 residues: Protein UL133 (257 aa).

The next 2 helical transmembrane spans lie at 14–34 and 45–65; these read WGVPTIIVAWITCAALGIWCL and PGIAAVVGCSVFMIFLCAYLI. Residues 149–232 form a disordered region; the sequence is PTVFVPPPSE…AMPQMPPGVA (84 aa). Positions 164 to 175 are enriched in pro residues; sequence VIPPQPPTPTSE. A compositionally biased stretch (basic residues) spans 179–193; that stretch reads KKGRAKDKPKGRPKN. Residues 214-228 are compositionally biased toward pro residues; it reads GGPPDASPPAMPQMP.

It localises to the host Golgi apparatus membrane. The chain is Protein UL133 (UL133) from Human cytomegalovirus (strain Merlin) (HHV-5).